The following is a 248-amino-acid chain: Triosephosphate isomerase (248 aa).

9-11 lines the substrate pocket; the sequence is NWK. The Electrophile role is filled by His94. The Proton acceptor role is filled by Glu166. Substrate contacts are provided by residues Gly172, Ser212, and 233–234; that span reads GG.

The protein belongs to the triosephosphate isomerase family. In terms of assembly, homodimer.

The protein resides in the cytoplasm. The catalysed reaction is D-glyceraldehyde 3-phosphate = dihydroxyacetone phosphate. It functions in the pathway carbohydrate biosynthesis; gluconeogenesis. It participates in carbohydrate degradation; glycolysis; D-glyceraldehyde 3-phosphate from glycerone phosphate: step 1/1. Its function is as follows. Involved in the gluconeogenesis. Catalyzes stereospecifically the conversion of dihydroxyacetone phosphate (DHAP) to D-glyceraldehyde-3-phosphate (G3P). This chain is Triosephosphate isomerase, found in Alkaliphilus oremlandii (strain OhILAs) (Clostridium oremlandii (strain OhILAs)).